The sequence spans 250 residues: Proteasome subunit alpha type-2 (250 aa).

Residue lysine 108 forms a Glycyl lysine isopeptide (Lys-Gly) (interchain with G-Cter in ubiquitin) linkage.

It belongs to the peptidase T1A family. As to quaternary structure, the 26S proteasome consists of a 20S proteasome core and two 19S regulatory subunits. The 20S proteasome core is composed of 28 subunits that are arranged in four stacked rings, resulting in a barrel-shaped structure. The two end rings are each formed by seven alpha subunits, and the two central rings are each formed by seven beta subunits. The catalytic chamber with the active sites is on the inside of the barrel.

Its subcellular location is the cytoplasm. It is found in the nucleus. Functionally, the proteasome degrades poly-ubiquitinated proteins in the cytoplasm and in the nucleus. It is essential for the regulated turnover of proteins and for the removal of misfolded proteins. The proteasome is a multicatalytic proteinase complex that is characterized by its ability to cleave peptides with Arg, Phe, Tyr, Leu, and Glu adjacent to the leaving group at neutral or slightly basic pH. It has an ATP-dependent proteolytic activity. The sequence is that of Proteasome subunit alpha type-2 (PRE8) from Saccharomyces cerevisiae (strain ATCC 204508 / S288c) (Baker's yeast).